The chain runs to 302 residues: Nucleotide-binding protein Strop_3101 (302 aa).

26–33 lines the ATP pocket; it reads GVSGGGRS. 77-80 serves as a coordination point for GTP; the sequence is DVRS.

Belongs to the RapZ-like family.

Its function is as follows. Displays ATPase and GTPase activities. The polypeptide is Nucleotide-binding protein Strop_3101 (Salinispora tropica (strain ATCC BAA-916 / DSM 44818 / JCM 13857 / NBRC 105044 / CNB-440)).